The chain runs to 325 residues: Hexaprenyl-diphosphate synthase large subunit ((2E,6E)-farnesyl-diphosphate specific) (325 aa).

3 residues coordinate isopentenyl diphosphate: lysine 45, arginine 48, and histidine 77. All-trans-hexaprenyl diphosphate is bound by residues aspartate 84, aspartate 88, and arginine 93. Residues aspartate 84 and aspartate 88 each contribute to the Mg(2+) site. Arginine 94 contributes to the isopentenyl diphosphate binding site. All-trans-hexaprenyl diphosphate-binding residues include lysine 170, threonine 171, and glutamine 208.

Belongs to the FPP/GGPP synthase family. In terms of assembly, dimer of heterodimer or heterotetramer composed of a small (Hexs-a) and large (Hexs-B) subunit. It depends on Mg(2+) as a cofactor.

The enzyme catalyses 3 isopentenyl diphosphate + (2E,6E)-farnesyl diphosphate = all-trans-hexaprenyl diphosphate + 3 diphosphate. Catalyzes the condensation of three molecules of isopentenyl diphosphate with farnesyl diphosphate (FPP) to yield (all-E)-hexaprenyl diphosphate (HexPP; C30), the precursor of the prenyl side chain of menaquinone-6. Large subunit Hexs-B catalyzes the condensation reaction and the final product chain length is cooperatively regulated by both the Hexs-A and Hexs-B subunits using the whole size of the hydrophobic cleft as a ruler. In Micrococcus luteus (Micrococcus lysodeikticus), this protein is Hexaprenyl-diphosphate synthase large subunit ((2E,6E)-farnesyl-diphosphate specific) (hexs-b).